We begin with the raw amino-acid sequence, 408 residues long: Pleckstrin homology domain-containing family O member 1 (408 aa).

Residues 1–21 form a disordered region; sequence MKKSGSGKRGPPDGNHQSAAP. The 112-residue stretch at 20 to 131 folds into the PH domain; that stretch reads APEKVGWVRK…WINALSSAIT (112 aa). Residues 132–192 form an interaction with capping proteins (CPs) region; the sequence is RAKNRILDEV…MLTLDLIQEE (61 aa). Residues 135–307 form an interaction with ATM, CKIP, IFP35 and NMI region; that stretch reads NRILDEVTVE…PAQPGQLSRI (173 aa). Positions 217 to 264 are disordered; sequence LAGSRRRADSDRIQPSSQRASSLSRPWEKPDKGAPYTPQALKKFPSTE. Residue Ser-226 is modified to Phosphoserine. Over residues 229-240 the composition is skewed to polar residues; that stretch reads IQPSSQRASSLS. Residues Ser-270 and Ser-341 each carry the phosphoserine modification. Residues 307 to 408 are negative regulator of AP-1 activity; it reads IQDLVARKLE…QHSQYRKSLM (102 aa). Disordered regions lie at residues 325–348 and 389–408; these read VQGL…SESE and TPDS…KSLM. Polar residues predominate over residues 389-401; sequence TPDSHLRQTSQHS.

Heterodimer or homodimer. Interacts with CK2 and actin capping subunits (capping protein CP-alpha and CP-beta). CKIP1 and CK2 together inhibit the activity of actin capping protein at the barbed ends of actin filaments. Interacts with ATM, IFP35, JUN, JUND, NMI and PI3K. Interacts with AKT1, AKT2 and AKT3 (each isozyme of PKB), PtdIns(3,5)P2, PtdIns(4,5)P2 and PtdIns(3,4,5)P2. C-terminal fragments could be released during apoptosis via caspase-3-dependent cleavage.

It is found in the cell membrane. It localises to the nucleus. The protein localises to the cytoplasm. In terms of biological role, plays a role in the regulation of the actin cytoskeleton through its interactions with actin capping protein (CP). May function to target CK2 to the plasma membrane thereby serving as an adapter to facilitate the phosphorylation of CP by protein kinase 2 (CK2). Appears to target ATM to the plasma membrane. Appears to also inhibit tumor cell growth by inhibiting AKT-mediated cell-survival. Also implicated in PI3K-regulated muscle differentiation, the regulation of AP-1 activity (plasma membrane bound AP-1 regulator that translocates to the nucleus) and the promotion of apoptosis induced by tumor necrosis factor TNF. When bound to PKB, it inhibits it probably by decreasing PKB level of phosphorylation. This is Pleckstrin homology domain-containing family O member 1 (Plekho1) from Mus musculus (Mouse).